Reading from the N-terminus, the 61-residue chain is Small ribosomal subunit protein uS14 (61 aa).

Positions 24, 27, 40, and 43 each coordinate Zn(2+).

The protein belongs to the universal ribosomal protein uS14 family. Zinc-binding uS14 subfamily. Part of the 30S ribosomal subunit. Contacts proteins S3 and S10. Zn(2+) serves as cofactor.

Its function is as follows. Binds 16S rRNA, required for the assembly of 30S particles and may also be responsible for determining the conformation of the 16S rRNA at the A site. This is Small ribosomal subunit protein uS14 from Caldicellulosiruptor bescii (strain ATCC BAA-1888 / DSM 6725 / KCTC 15123 / Z-1320) (Anaerocellum thermophilum).